Reading from the N-terminus, the 138-residue chain is Acidic phospholipase A2 MVL-PLA2 (138 aa).

An N-terminal signal peptide occupies residues 1-16 (MRTLWIVAVCLMGVEG). 7 disulfides stabilise this stretch: Cys-42–Cys-131, Cys-44–Cys-60, Cys-59–Cys-111, Cys-65–Cys-138, Cys-66–Cys-104, Cys-73–Cys-97, and Cys-91–Cys-102. Residues Tyr-43, Gly-45, and Gly-47 each coordinate Ca(2+). Residue His-63 is part of the active site. Asp-64 is a Ca(2+) binding site. A May inhibit integrin function (Atypical cell attachment site) motif is present at residues 86–88 (NGD). Residue Asp-105 is part of the active site.

It belongs to the phospholipase A2 family. Group II subfamily. D49 sub-subfamily. Ca(2+) is required as a cofactor. As to expression, expressed by the venom gland.

It is found in the secreted. It catalyses the reaction a 1,2-diacyl-sn-glycero-3-phosphocholine + H2O = a 1-acyl-sn-glycero-3-phosphocholine + a fatty acid + H(+). In terms of biological role, snake venom phospholipase A2 (PLA2) that displays an inhibitory effect, independent from its catalytic activity, on tumor cell adhesion and migration. This effect is mediated via specific inhibition of integrins alpha-5/beta-1 (ITGA5/ITGB1), alpha-v/beta-3 (ITGAV/ITGB3) and alpha-v/beta-6 (ITGAV/ITGB6). PLA2 catalyzes the calcium-dependent hydrolysis of the 2-acyl groups in 3-sn-phosphoglycerides. This is Acidic phospholipase A2 MVL-PLA2 from Macrovipera lebetina transmediterranea (Blunt-nosed viper).